Consider the following 89-residue polypeptide: Putative regulatory protein MAE_11840 (89 aa).

This sequence belongs to the RemA family.

This Microcystis aeruginosa (strain NIES-843 / IAM M-2473) protein is Putative regulatory protein MAE_11840.